The following is a 205-amino-acid chain: 5'-deoxynucleotidase HDDC2 (205 aa).

Alanine 2 is modified (N-acetylalanine). Phosphoserine occurs at positions 3 and 5. An HD domain is found at 47 to 149 (VSDHMYRMAV…VKQLDQCEMI (103 aa)). Residues histidine 50, histidine 78, aspartate 79, glutamate 82, aspartate 87, isoleucine 88, and aspartate 144 each contribute to the a divalent metal cation site. Serine 205 bears the Phosphoserine mark.

It belongs to the HDDC2 family. In terms of assembly, homodimer. The cofactor is Mn(2+). Requires Co(2+) as cofactor. It depends on Mg(2+) as a cofactor.

The catalysed reaction is a 2'-deoxyribonucleoside 5'-phosphate + H2O = a 2'-deoxyribonucleoside + phosphate. Functionally, catalyzes the dephosphorylation of the nucleoside 5'-monophosphates deoxyadenosine monophosphate (dAMP), deoxycytidine monophosphate (dCMP), deoxyguanosine monophosphate (dGMP) and deoxythymidine monophosphate (dTMP). The chain is 5'-deoxynucleotidase HDDC2 (HDDC2) from Bos taurus (Bovine).